A 629-amino-acid polypeptide reads, in one-letter code: 1-deoxy-D-xylulose-5-phosphate synthase (629 aa).

Residues His78 and 119–121 (AHS) contribute to the thiamine diphosphate site. Position 150 (Asp150) interacts with Mg(2+). Thiamine diphosphate-binding positions include 151-152 (GA), Asn179, Tyr286, and Glu368. Asn179 lines the Mg(2+) pocket.

It belongs to the transketolase family. DXPS subfamily. In terms of assembly, homodimer. Mg(2+) is required as a cofactor. Thiamine diphosphate serves as cofactor.

It carries out the reaction D-glyceraldehyde 3-phosphate + pyruvate + H(+) = 1-deoxy-D-xylulose 5-phosphate + CO2. It functions in the pathway metabolic intermediate biosynthesis; 1-deoxy-D-xylulose 5-phosphate biosynthesis; 1-deoxy-D-xylulose 5-phosphate from D-glyceraldehyde 3-phosphate and pyruvate: step 1/1. Its function is as follows. Catalyzes the acyloin condensation reaction between C atoms 2 and 3 of pyruvate and glyceraldehyde 3-phosphate to yield 1-deoxy-D-xylulose-5-phosphate (DXP). The protein is 1-deoxy-D-xylulose-5-phosphate synthase of Acidovorax ebreus (strain TPSY) (Diaphorobacter sp. (strain TPSY)).